A 668-amino-acid chain; its full sequence is Ankyrin repeat domain-containing protein OPG023 (668 aa).

ANK repeat units follow at residues 31–64 (FKNN…PLHK), 101–131 (NDFN…DFSV), 135–166 (KHHS…SVIY), 199–231 (YIIS…NPSS), 235–266 (NYCT…NTAY), 277–311 (RGIM…PHGI), 334–368 (NSDV…VVNK), 458–487 (RGET…DVNI), and 491–521 (NGYT…TLDC). A PRANC/F-box-like region spans residues 586–666 (GNTMFSLIFT…PYTIKYKIFE (81 aa)).

The protein belongs to the orthopoxvirus OPG023 family. As to quaternary structure, interacts (via N-terminus) with host RELA. Interacts (via PRANC/F-box-like domain) with the SKP1 component of the host SCF ubiquitin ligase complex.

Functionally, substrate-specific adapter of SKP1-containing E3 ubiquitin-protein ligases which mediate the ubiquitination and subsequent proteasomal degradation of host target proteins. Prevents activation and subsequent nuclear localization of NF-kappa-B in infected cells, by targeting NF-kappa-B RELA subunit to the SCF E3 ligase complex. The polypeptide is Ankyrin repeat domain-containing protein OPG023 (OPG023) (Bos taurus (Bovine)).